The primary structure comprises 432 residues: Ornithine decarboxylase 1A, chloroplastic (432 aa).

Lysine 95 bears the N6-(pyridoxal phosphate)lysine mark. Pyridoxal 5'-phosphate contacts are provided by residues serine 227, glycine 265, and glutamate 298–arginine 301. Tyrosine 341–aspartate 342 contributes to the substrate binding site. The active-site Proton donor; shared with dimeric partner is cysteine 377. Aspartate 378 is a substrate binding site. Tyrosine 406 lines the pyridoxal 5'-phosphate pocket.

It belongs to the Orn/Lys/Arg decarboxylase class-II family. As to quaternary structure, homodimer. Only the dimer is catalytically active, as the active sites are constructed of residues from both monomers. It depends on pyridoxal 5'-phosphate as a cofactor.

The protein localises to the plastid. It is found in the chloroplast. It catalyses the reaction L-ornithine + H(+) = putrescine + CO2. The protein operates within alkaloid biosynthesis; nicotine biosynthesis. It participates in amine and polyamine biosynthesis; putrescine biosynthesis via L-ornithine pathway; putrescine from L-ornithine: step 1/1. Involved in the biosynthesis of pyridine alkaloid natural products, leading mainly to the production of anabasine, anatabine, nicotine and nornicotine, effective deterrents against herbivores with antiparasitic and pesticide properties (neurotoxins); nornicotine serves as the precursor in the synthesis of the carcinogen compound N'-nitrosonornicotine (NNN). Catalyzes the first and rate-limiting step of polyamine biosynthesis that converts ornithine into putrescine, which is the precursor for the polyamines, spermidine and spermine. Polyamines are essential for cell proliferation and are implicated in cellular processes, ranging from DNA replication to apoptosis. This Nicotiana tabacum (Common tobacco) protein is Ornithine decarboxylase 1A, chloroplastic.